The primary structure comprises 283 residues: Plasma membrane ascorbate-dependent reductase CYBRD1 (283 aa).

Residues 1-5 (MEGYK) are Cytoplasmic-facing. A helical membrane pass occupies residues 6-30 (SFLVFLVSSLLLGFLGVIFTLVWVL). In terms of domain architecture, Cytochrome b561 spans 13-218 (SSLLLGFLGV…FGGLVVWMVT (206 aa)). At 31–45 (HWREGLGWDGGAAEF) the chain is on the extracellular side. Residues 46–67 (NWHPVLVTSGFIFIQGIAIIVY) traverse the membrane as a helical segment. 3 residues coordinate heme b: His-48, Arg-68, and Lys-77. The Cytoplasmic portion of the chain corresponds to 68 to 76 (RLPWTWNCS). The L-ascorbate site is built by Lys-77 and Lys-81. Residues 77-103 (KLLMKFIHAGLHLTAFVFTIVALVAVF) form a helical membrane-spanning segment. Heme b is bound at residue His-84. Over 104 to 116 (DFHNAKNIPNMYS) the chain is Extracellular. A Fe(3+)-binding site is contributed by His-106. Heme b-binding positions include 113 to 116 (NMYS) and His-118. The chain crosses the membrane as a helical span at residues 117–142 (LHSWIGLTVVILYALQLVLGVSIYLL). At 143–149 (PFARDTL) the chain is on the cytoplasmic side. Residue Arg-150 coordinates L-ascorbate. The helical transmembrane segment at 150–177 (RAALMPVHVYSGLLIFGTVIATALMGIT) threads the bilayer. Heme b contacts are provided by His-157 and Glu-178. The Extracellular segment spans residues 178–195 (EKLIFSLKEPPYSKMPPE). Residues 196 to 220 (AIFVNTFGLIILVFGGLVVWMVTTP) traverse the membrane as a helical segment. Residues 221-283 (AWKRPREQEI…LDDAGQRSTM (63 aa)) lie on the Cytoplasmic side of the membrane. Lys-223 contributes to the heme b binding site. Residues 234–263 (NPTVSSPDGTEEGSTITDCSNTEKSDVELN) form a disordered region. Polar residues predominate over residues 235–253 (PTVSSPDGTEEGSTITDCS). Positions 254-263 (NTEKSDVELN) are enriched in basic and acidic residues.

As to quaternary structure, homodimer. Heme b serves as cofactor.

It is found in the cell membrane. It localises to the apical cell membrane. The enzyme catalyses Fe(3+)(out) + L-ascorbate(in) = monodehydro-L-ascorbate radical(in) + Fe(2+)(out) + H(+). It carries out the reaction Cu(2+)(out) + L-ascorbate(in) = Cu(+)(out) + monodehydro-L-ascorbate radical(in) + H(+). The catalysed reaction is monodehydro-L-ascorbate radical(out) + L-ascorbate(in) = monodehydro-L-ascorbate radical(in) + L-ascorbate(out). Its function is as follows. Plasma membrane reductase that uses cytoplasmic ascorbate as an electron donor to reduce extracellular Fe(3+) into Fe(2+). It is also able to reduce extracellular monodehydro-L-ascorbate and may be involved in extracellular ascorbate regeneration. May also function as a cupric transmembrane reductase. The sequence is that of Plasma membrane ascorbate-dependent reductase CYBRD1 (cybrd1) from Xenopus tropicalis (Western clawed frog).